The following is a 406-amino-acid chain: Glutamyl-tRNA(Gln) amidotransferase subunit D (406 aa).

Residues 68–390 (KSISILATGG…EEFINVFNRN (323 aa)) enclose the Asparaginase/glutaminase domain. Active-site residues include threonine 78, threonine 152, aspartate 153, and lysine 230.

It belongs to the asparaginase 1 family. GatD subfamily. As to quaternary structure, heterodimer of GatD and GatE.

The catalysed reaction is L-glutamyl-tRNA(Gln) + L-glutamine + ATP + H2O = L-glutaminyl-tRNA(Gln) + L-glutamate + ADP + phosphate + H(+). Functionally, allows the formation of correctly charged Gln-tRNA(Gln) through the transamidation of misacylated Glu-tRNA(Gln) in organisms which lack glutaminyl-tRNA synthetase. The reaction takes place in the presence of glutamine and ATP through an activated gamma-phospho-Glu-tRNA(Gln). The GatDE system is specific for glutamate and does not act on aspartate. The chain is Glutamyl-tRNA(Gln) amidotransferase subunit D from Thermoplasma volcanium (strain ATCC 51530 / DSM 4299 / JCM 9571 / NBRC 15438 / GSS1).